The following is a 221-amino-acid chain: Imidazoleglycerol-phosphate dehydratase (221 aa).

It belongs to the imidazoleglycerol-phosphate dehydratase family.

It catalyses the reaction D-erythro-1-(imidazol-4-yl)glycerol 3-phosphate = 3-(imidazol-4-yl)-2-oxopropyl phosphate + H2O. The protein operates within amino-acid biosynthesis; L-histidine biosynthesis; L-histidine from 5-phospho-alpha-D-ribose 1-diphosphate: step 6/9. This is Imidazoleglycerol-phosphate dehydratase (HIS3) from Kluyveromyces marxianus (Yeast).